A 553-amino-acid polypeptide reads, in one-letter code: Dihydroxy-acid dehydratase (553 aa).

D78 contacts Mg(2+). C119 lines the [2Fe-2S] cluster pocket. 2 residues coordinate Mg(2+): D120 and K121. At K121 the chain carries N6-carboxylysine. C191 serves as a coordination point for [2Fe-2S] cluster. E444 lines the Mg(2+) pocket. The active-site Proton acceptor is the S470.

It belongs to the IlvD/Edd family. In terms of assembly, homodimer. [2Fe-2S] cluster serves as cofactor. Requires Mg(2+) as cofactor.

It catalyses the reaction (2R)-2,3-dihydroxy-3-methylbutanoate = 3-methyl-2-oxobutanoate + H2O. The enzyme catalyses (2R,3R)-2,3-dihydroxy-3-methylpentanoate = (S)-3-methyl-2-oxopentanoate + H2O. Its pathway is amino-acid biosynthesis; L-isoleucine biosynthesis; L-isoleucine from 2-oxobutanoate: step 3/4. It participates in amino-acid biosynthesis; L-valine biosynthesis; L-valine from pyruvate: step 3/4. Its function is as follows. Functions in the biosynthesis of branched-chain amino acids. Catalyzes the dehydration of (2R,3R)-2,3-dihydroxy-3-methylpentanoate (2,3-dihydroxy-3-methylvalerate) into 2-oxo-3-methylpentanoate (2-oxo-3-methylvalerate) and of (2R)-2,3-dihydroxy-3-methylbutanoate (2,3-dihydroxyisovalerate) into 2-oxo-3-methylbutanoate (2-oxoisovalerate), the penultimate precursor to L-isoleucine and L-valine, respectively. The polypeptide is Dihydroxy-acid dehydratase (Methanosarcina barkeri (strain Fusaro / DSM 804)).